Here is a 136-residue protein sequence, read N- to C-terminus: Urease subunit beta (136 aa).

It belongs to the urease beta subunit family. Heterotrimer of UreA (gamma), UreB (beta) and UreC (alpha) subunits. Three heterotrimers associate to form the active enzyme.

The protein resides in the cytoplasm. It carries out the reaction urea + 2 H2O + H(+) = hydrogencarbonate + 2 NH4(+). Its pathway is nitrogen metabolism; urea degradation; CO(2) and NH(3) from urea (urease route): step 1/1. The chain is Urease subunit beta from Staphylococcus aureus (strain Mu3 / ATCC 700698).